A 469-amino-acid chain; its full sequence is Neuraminidase (469 aa).

Topologically, residues 1–6 are intravirion; it reads MNPNQK. A helical membrane pass occupies residues 7–27; the sequence is IITIGSICMVVGIISLILQIG. An involved in apical transport and lipid raft association region spans residues 11-33; that stretch reads GSICMVVGIISLILQIGNIISIW. The Virion surface portion of the chain corresponds to 28–469; it reads NIISIWISHS…GAELPFTIDK (442 aa). A hypervariable stalk region region spans residues 36–90; sequence HSIQTGSQNHTGTCNQSIITYKNSTWVNQTYVNISNTNVVAGKDTTSVILAGNSS. Asn-44, Asn-50, Asn-58, Asn-63, Asn-68, and Asn-88 each carry an N-linked (GlcNAc...) asparagine; by host glycan. Residues 91 to 469 are head of neuraminidase; sequence LCPIRGWAIY…GAELPFTIDK (379 aa). 8 disulfides stabilise this stretch: Cys-92–Cys-417, Cys-124–Cys-129, Cys-184–Cys-231, Cys-233–Cys-238, Cys-279–Cys-292, Cys-281–Cys-290, Cys-318–Cys-335, and Cys-421–Cys-446. Residue Arg-118 coordinates substrate. Asn-146 carries an N-linked (GlcNAc...) asparagine; by host glycan. Asp-151 (proton donor/acceptor) is an active-site residue. Arg-152 lines the substrate pocket. Asn-235 carries an N-linked (GlcNAc...) asparagine; by host glycan. Residue 277-278 coordinates substrate; sequence EE. Residue Arg-293 participates in substrate binding. Residues Asp-294, Gly-298, Asp-324, and Asn-344 each contribute to the Ca(2+) site. Residue Asn-365 is glycosylated (N-linked (GlcNAc...) asparagine; by host). Residue Arg-368 participates in substrate binding. Tyr-402 serves as the catalytic Nucleophile.

The protein belongs to the glycosyl hydrolase 34 family. Homotetramer. It depends on Ca(2+) as a cofactor. N-glycosylated.

Its subcellular location is the virion membrane. The protein resides in the host apical cell membrane. It catalyses the reaction Hydrolysis of alpha-(2-&gt;3)-, alpha-(2-&gt;6)-, alpha-(2-&gt;8)- glycosidic linkages of terminal sialic acid residues in oligosaccharides, glycoproteins, glycolipids, colominic acid and synthetic substrates.. Inhibited by the neuraminidase inhibitors zanamivir (Relenza) and oseltamivir (Tamiflu). These drugs interfere with the release of progeny virus from infected cells and are effective against all influenza strains. Resistance to neuraminidase inhibitors is quite rare. Its function is as follows. Catalyzes the removal of terminal sialic acid residues from viral and cellular glycoconjugates. Cleaves off the terminal sialic acids on the glycosylated HA during virus budding to facilitate virus release. Additionally helps virus spread through the circulation by further removing sialic acids from the cell surface. These cleavages prevent self-aggregation and ensure the efficient spread of the progeny virus from cell to cell. Otherwise, infection would be limited to one round of replication. Described as a receptor-destroying enzyme because it cleaves a terminal sialic acid from the cellular receptors. May facilitate viral invasion of the upper airways by cleaving the sialic acid moieties on the mucin of the airway epithelial cells. Likely to plays a role in the budding process through its association with lipid rafts during intracellular transport. May additionally display a raft-association independent effect on budding. Plays a role in the determination of host range restriction on replication and virulence. Sialidase activity in late endosome/lysosome traffic seems to enhance virus replication. The chain is Neuraminidase from Aves (Human).